We begin with the raw amino-acid sequence, 340 residues long: Beta-ketoacyl-[acyl-carrier-protein] synthase III (340 aa).

Residues C119 and H260 contribute to the active site. Residues 261–265 form an ACP-binding region; that stretch reads QANYR. N290 is an active-site residue.

Belongs to the thiolase-like superfamily. FabH family. As to quaternary structure, homodimer.

The protein resides in the cytoplasm. The enzyme catalyses malonyl-[ACP] + acetyl-CoA + H(+) = 3-oxobutanoyl-[ACP] + CO2 + CoA. It participates in lipid metabolism; fatty acid biosynthesis. Catalyzes the condensation reaction of fatty acid synthesis by the addition to an acyl acceptor of two carbons from malonyl-ACP. Catalyzes the first condensation reaction which initiates fatty acid synthesis and may therefore play a role in governing the total rate of fatty acid production. Possesses both acetoacetyl-ACP synthase and acetyl transacylase activities. Its substrate specificity determines the biosynthesis of branched-chain and/or straight-chain of fatty acids. The chain is Beta-ketoacyl-[acyl-carrier-protein] synthase III from Sulfurovum sp. (strain NBC37-1).